Consider the following 657-residue polypeptide: Protein PSK SIMULATOR 1 (657 aa).

Composition is skewed to polar residues over residues 1 to 15 (MGGLCSRSSSVNNAP), 26 to 39 (HLNNNASDLNSHSG), 62 to 76 (ESFSFPIVSSGSHPQ), and 540 to 556 (RSPNQKTIQLSSGSHNP). Disordered regions lie at residues 1–80 (MGGL…NIED) and 534–559 (PVKSPIRSPNQKTIQLSSGSHNPSMG). Glycine 2 carries the N-myristoyl glycine lipid modification.

The protein localises to the nucleus. Functionally, promotes seedling growth probably via the regulation of phytosulfokine (PSK) signaling; PSK are peptide phytohormones acting as growth factors. Together with PSI2 and PSI3, required during vegetative growth and reproduction. May also have a function in carbohydrate metabolism. This Arabidopsis thaliana (Mouse-ear cress) protein is Protein PSK SIMULATOR 1.